Consider the following 241-residue polypeptide: Pyridoxine 5'-phosphate synthase (241 aa).

Position 10 (Asn10) interacts with 3-amino-2-oxopropyl phosphate. 12-13 (DH) is a 1-deoxy-D-xylulose 5-phosphate binding site. Arg21 is a binding site for 3-amino-2-oxopropyl phosphate. His48 functions as the Proton acceptor in the catalytic mechanism. The 1-deoxy-D-xylulose 5-phosphate site is built by Arg50 and His55. Glu75 acts as the Proton acceptor in catalysis. Thr105 contacts 1-deoxy-D-xylulose 5-phosphate. The active-site Proton donor is the His195. Residues Gly196 and 217–218 (GH) contribute to the 3-amino-2-oxopropyl phosphate site.

It belongs to the PNP synthase family. In terms of assembly, homooctamer; tetramer of dimers.

It is found in the cytoplasm. It catalyses the reaction 3-amino-2-oxopropyl phosphate + 1-deoxy-D-xylulose 5-phosphate = pyridoxine 5'-phosphate + phosphate + 2 H2O + H(+). It functions in the pathway cofactor biosynthesis; pyridoxine 5'-phosphate biosynthesis; pyridoxine 5'-phosphate from D-erythrose 4-phosphate: step 5/5. In terms of biological role, catalyzes the complicated ring closure reaction between the two acyclic compounds 1-deoxy-D-xylulose-5-phosphate (DXP) and 3-amino-2-oxopropyl phosphate (1-amino-acetone-3-phosphate or AAP) to form pyridoxine 5'-phosphate (PNP) and inorganic phosphate. The polypeptide is Pyridoxine 5'-phosphate synthase (Bdellovibrio bacteriovorus (strain ATCC 15356 / DSM 50701 / NCIMB 9529 / HD100)).